The sequence spans 334 residues: Methionine adenosyltransferase 2 subunit beta (334 aa).

Residues 37–40 (TGLL), 60–62 (FRR), 71–72 (NL), Cys93, Arg97, Tyr159, and Leu185 each bind NADP(+). Phosphothreonine is present on Thr309. The required for interaction with MAT2A stretch occupies residues 319-334 (LWPFLIDKRWRQTVFH).

Belongs to the dTDP-4-dehydrorhamnose reductase family. MAT2B subfamily. Heterotrimer; composed of a catalytic MAT2A homodimer that binds one regulatory MAT2B chain. Heterohexamer; composed of a central, catalytic MAT2A homotetramer flanked on either side by a regulatory MAT2B chain. NADP binding increases the affinity for MAT2A.

It participates in amino-acid biosynthesis; S-adenosyl-L-methionine biosynthesis; S-adenosyl-L-methionine from L-methionine: step 1/1. Functionally, regulatory subunit of S-adenosylmethionine synthetase 2, an enzyme that catalyzes the formation of S-adenosylmethionine from methionine and ATP. Regulates MAT2A catalytic activity by changing its kinetic properties, increasing its affinity for L-methionine. Can bind NADP (in vitro). In Pongo abelii (Sumatran orangutan), this protein is Methionine adenosyltransferase 2 subunit beta (MAT2B).